The primary structure comprises 508 residues: Aldehyde dehydrogenase family 7 member A1 (508 aa).

244-249 contributes to the NAD(+) binding site; sequence GSSKVG. The active-site Proton acceptor is glutamate 266. Catalysis depends on cysteine 300, which acts as the Nucleophile.

The protein belongs to the aldehyde dehydrogenase family. In terms of assembly, homotetramer.

The catalysed reaction is an aldehyde + NAD(+) + H2O = a carboxylate + NADH + 2 H(+). The sequence is that of Aldehyde dehydrogenase family 7 member A1 from Pisum sativum (Garden pea).